The primary structure comprises 784 residues: Cadherin-15 (784 aa).

Residues 1–21 (MGSALLLALGLLAQSLGLSWA) form the signal peptide. A propeptide spanning residues 22-59 (VPEPKPSTLYPWRRASAPGRVRRAWVIPPISVSENHKR) is cleaved from the precursor. 5 Cadherin domains span residues 60-151 (LPYP…RPAF), 152-259 (LQDV…APEF), 260-374 (TKDE…APVF), 375-480 (PENP…DHAP), and 481-589 (ALAL…TCLP). The Extracellular portion of the chain corresponds to 60–605 (LPYPLVQIKS…GGGVGVSLGA (546 aa)). Asn-106 and Asn-226 each carry an N-linked (GlcNAc...) asparagine glycan. 3 N-linked (GlcNAc...) asparagine glycosylation sites follow: Asn-530, Asn-537, and Asn-575. Residues 606 to 625 (LVIVLASTVVLLVLILLAAL) traverse the membrane as a helical segment. The Cytoplasmic portion of the chain corresponds to 626 to 784 (RTRFRGHSRG…ARLADMYGHQ (159 aa)). The disordered stretch occupies residues 676 to 700 (EPRATSRSLGRPPLRRDAPFSYVPQ).

As to expression, skeletal muscle.

It localises to the cell membrane. In terms of biological role, cadherins are calcium-dependent cell adhesion proteins. They preferentially interact with themselves in a homophilic manner in connecting cells; cadherins may thus contribute to the sorting of heterogeneous cell types. M-cadherin is part of the myogenic program and may provide a trigger for terminal muscle differentiation. This Mus musculus (Mouse) protein is Cadherin-15 (Cdh15).